The chain runs to 100 residues: Small ribosomal subunit protein uS14c (100 aa).

A disordered region spans residues 1–31 (MARKSLIQREKKRQKLEQKYHSIRRSSKKEI).

This sequence belongs to the universal ribosomal protein uS14 family. As to quaternary structure, part of the 30S ribosomal subunit.

The protein localises to the plastid. The protein resides in the chloroplast. Its function is as follows. Binds 16S rRNA, required for the assembly of 30S particles. The polypeptide is Small ribosomal subunit protein uS14c (Solanum bulbocastanum (Wild potato)).